The following is a 371-amino-acid chain: Transaldolase (371 aa).

Lys-140 (schiff-base intermediate with substrate) is an active-site residue.

It belongs to the transaldolase family. Type 2 subfamily.

Its subcellular location is the cytoplasm. It catalyses the reaction D-sedoheptulose 7-phosphate + D-glyceraldehyde 3-phosphate = D-erythrose 4-phosphate + beta-D-fructose 6-phosphate. It functions in the pathway carbohydrate degradation; pentose phosphate pathway; D-glyceraldehyde 3-phosphate and beta-D-fructose 6-phosphate from D-ribose 5-phosphate and D-xylulose 5-phosphate (non-oxidative stage): step 2/3. Functionally, transaldolase is important for the balance of metabolites in the pentose-phosphate pathway. In Frankia alni (strain DSM 45986 / CECT 9034 / ACN14a), this protein is Transaldolase.